Reading from the N-terminus, the 520-residue chain is GMP synthase [glutamine-hydrolyzing] (520 aa).

The 194-residue stretch at 12 to 205 (KIIVLDYGSQ…AISICGARGD (194 aa)) folds into the Glutamine amidotransferase type-1 domain. The Nucleophile role is filled by Cys89. Residues His179 and Glu181 contribute to the active site. The 190-residue stretch at 206–395 (WSMDNFIDME…LGMPEEIVWR (190 aa)) folds into the GMPS ATP-PPase domain. An ATP-binding site is contributed by 233 to 239 (SGGVDSS).

As to quaternary structure, homodimer.

The enzyme catalyses XMP + L-glutamine + ATP + H2O = GMP + L-glutamate + AMP + diphosphate + 2 H(+). Its pathway is purine metabolism; GMP biosynthesis; GMP from XMP (L-Gln route): step 1/1. Its function is as follows. Catalyzes the synthesis of GMP from XMP. The polypeptide is GMP synthase [glutamine-hydrolyzing] (Streptococcus pyogenes serotype M5 (strain Manfredo)).